The primary structure comprises 115 residues: NAD(P)H-quinone oxidoreductase subunit M (115 aa).

Belongs to the complex I NdhM subunit family. In terms of assembly, NDH-1 can be composed of about 15 different subunits; different subcomplexes with different compositions have been identified which probably have different functions.

It localises to the cellular thylakoid membrane. It catalyses the reaction a plastoquinone + NADH + (n+1) H(+)(in) = a plastoquinol + NAD(+) + n H(+)(out). The catalysed reaction is a plastoquinone + NADPH + (n+1) H(+)(in) = a plastoquinol + NADP(+) + n H(+)(out). NDH-1 shuttles electrons from an unknown electron donor, via FMN and iron-sulfur (Fe-S) centers, to quinones in the respiratory and/or the photosynthetic chain. The immediate electron acceptor for the enzyme in this species is believed to be plastoquinone. Couples the redox reaction to proton translocation, and thus conserves the redox energy in a proton gradient. Cyanobacterial NDH-1 also plays a role in inorganic carbon-concentration. This is NAD(P)H-quinone oxidoreductase subunit M from Prochlorococcus marinus (strain NATL1A).